We begin with the raw amino-acid sequence, 187 residues long: GTP cyclohydrolase 1 (187 aa).

Zn(2+) contacts are provided by C76, H79, and C148.

Belongs to the GTP cyclohydrolase I family. As to quaternary structure, toroid-shaped homodecamer, composed of two pentamers of five dimers.

The catalysed reaction is GTP + H2O = 7,8-dihydroneopterin 3'-triphosphate + formate + H(+). Its pathway is cofactor biosynthesis; 7,8-dihydroneopterin triphosphate biosynthesis; 7,8-dihydroneopterin triphosphate from GTP: step 1/1. In Acetivibrio thermocellus (strain ATCC 27405 / DSM 1237 / JCM 9322 / NBRC 103400 / NCIMB 10682 / NRRL B-4536 / VPI 7372) (Clostridium thermocellum), this protein is GTP cyclohydrolase 1.